Reading from the N-terminus, the 497-residue chain is COP9 signalosome complex subunit 3 (497 aa).

Residues 233–408 form the PCI domain; sequence QAFDAFERCV…DGSPAYLTFL (176 aa).

Belongs to the CSN3 family. As to quaternary structure, component of the COP9 signalosome (CSN) complex.

It is found in the cytoplasm. It localises to the nucleus. In terms of biological role, component of the COP9 signalosome (CSN) complex that acts as an regulator of the ubiquitin (Ubl) conjugation pathway by mediating the deneddylation of the cullin subunit of SCF-type E3 ubiquitin-protein ligase complexes. The CSN complex is involved in the regulation of the circadian clock through its control of the stability of the SCF(FWD1) complex. In Neurospora crassa (strain ATCC 24698 / 74-OR23-1A / CBS 708.71 / DSM 1257 / FGSC 987), this protein is COP9 signalosome complex subunit 3 (csn-3).